The following is a 186-amino-acid chain: Putative inactive recombination-promoting nuclease-like protein YjiQ (186 aa).

It belongs to the Rpn/YhgA-like nuclease family.

This pseudogene is the C-terminal fragment of low activity DNA endonuclease RpnD which probably yields 3'-hydroxyl ends. The intact protein can be seen in this entry (AC B7NGZ6). Expression of the repaired protein increases the frequency of recA-independent recombination, but also decreases viability probably via DNA damage; in a RecA strain expression has no effect on viability but does induce the SOS repair response. May play a role in horizontal gene transfer. In Escherichia coli (strain K12), this protein is Putative inactive recombination-promoting nuclease-like protein YjiQ (yjiQ).